Consider the following 118-residue polypeptide: uncharacterized protein (118 aa).

It localises to the mitochondrion. This is an uncharacterized protein from Arabidopsis thaliana (Mouse-ear cress).